We begin with the raw amino-acid sequence, 167 residues long: NADH-quinone oxidoreductase subunit B (167 aa).

Cysteine 40, cysteine 41, cysteine 105, and cysteine 134 together coordinate [4Fe-4S] cluster.

The protein belongs to the complex I 20 kDa subunit family. NDH-1 is composed of 14 different subunits. Subunits NuoB, C, D, E, F, and G constitute the peripheral sector of the complex. Requires [4Fe-4S] cluster as cofactor.

It is found in the cell inner membrane. It carries out the reaction a quinone + NADH + 5 H(+)(in) = a quinol + NAD(+) + 4 H(+)(out). Functionally, NDH-1 shuttles electrons from NADH, via FMN and iron-sulfur (Fe-S) centers, to quinones in the respiratory chain. The immediate electron acceptor for the enzyme in this species is believed to be ubiquinone. Couples the redox reaction to proton translocation (for every two electrons transferred, four hydrogen ions are translocated across the cytoplasmic membrane), and thus conserves the redox energy in a proton gradient. The polypeptide is NADH-quinone oxidoreductase subunit B (Campylobacter jejuni subsp. jejuni serotype O:2 (strain ATCC 700819 / NCTC 11168)).